The chain runs to 1180 residues: RecBCD enzyme subunit RecB (1180 aa).

Residues 2–450 enclose the UvrD-like helicase ATP-binding domain; the sequence is SDVAETLDPL…YTLDTNWRSA (449 aa). Positions 2-853 are ATPase, DNA-binding and helicase activity, interacts with RecC; it reads SDVAETLDPL…KGEPQDAAGL (852 aa). ATP is bound at residue 23 to 30; that stretch reads ASAGTGKT. The DNA-binding element occupies 252–254; that stretch reads IDR. Residue Trp447 participates in ATP binding. Residues 480–746 enclose the UvrD-like helicase C-terminal domain; sequence SAGKNQALRF…QIVTIHKSKG (267 aa). 3 consecutive DNA-binding regions follow at residues 511–512, 560–561, and Arg761; these read VG and SR. Residues 900–1180 form a nuclease activity, interacts with RecD and RecA region; sequence NWRVTSYSGL…MFAGMTLEEA (281 aa). Residues His956, Asp1067, Asp1080, and Tyr1081 each coordinate Mg(2+). Asp1080 serves as the catalytic For nuclease activity.

It belongs to the helicase family. UvrD subfamily. As to quaternary structure, heterotrimer of RecB, RecC and RecD. All subunits contribute to DNA-binding. The C-terminus interacts with RecA. Interacts with YgbT (Cas1). In terms of assembly, (Microbial infection) Lambda virus GamS protein interacts with the enzyme without displacing any of the subunits. Mg(2+) serves as cofactor.

It catalyses the reaction Exonucleolytic cleavage (in the presence of ATP) in either 5'- to 3'- or 3'- to 5'-direction to yield 5'-phosphooligonucleotides.. The enzyme catalyses Couples ATP hydrolysis with the unwinding of duplex DNA by translocating in the 3'-5' direction.. The catalysed reaction is ATP + H2O = ADP + phosphate + H(+). Its activity is regulated as follows. After reacting with DNA bearing a Chi site the holoenzyme is disassembled and loses exonuclease activity, DNA unwinding and Chi-directed DNA cleavage; RecB remains complexed with ssDNA, which may prevent holoenzyme reassembly. High levels of Mg(2+) (13 mM MgCl(2+)) or incubation with DNase allows holoenzyme reassembly, suggesting it is DNA bound to RecB that prevents reassembly. With respect to regulation, (Microbial infection) RecBCD is inhibited by the lambda virus gam protein (both GamL and GamS isoforms); in vitro a short preincubation prior to adding DNA results in maximal inhibition. In terms of biological role, a helicase/nuclease that prepares dsDNA breaks (DSB) for recombinational DNA repair. Binds to DSBs and unwinds DNA via a rapid (&gt;1 kb/second) and highly processive (&gt;30 kb) ATP-dependent bidirectional helicase. Unwinds dsDNA until it encounters a Chi (crossover hotspot instigator, 5'-GCTGGTGG-3') sequence from the 3' direction. Cuts ssDNA a few nucleotides 3' to Chi site, by nicking one strand or switching the strand degraded (depending on the reaction conditions). The properties and activities of the enzyme are changed at Chi. The Chi-altered holoenzyme produces a long 3'-ssDNA overhang which facilitates RecA-binding to the ssDNA for homologous DNA recombination and repair. Holoenzyme degrades any linearized DNA that is unable to undergo homologous recombination. In the holoenzyme this subunit contributes ATPase, 3'-5' helicase, exonuclease activity and loads RecA onto ssDNA. The RecBC complex requires the RecD subunit for nuclease activity, but can translocate along ssDNA in both directions. The RecBCD complex does not unwind G-quadruplex DNA. Probably interacts with a component of retron Ec48 which moniters RecBCD stability; when RecB is missing or impaired the retron is activated and becomes toxic. The protein is RecBCD enzyme subunit RecB of Escherichia coli (strain K12).